Consider the following 490-residue polypeptide: Probable cytosol aminopeptidase (490 aa).

Mn(2+)-binding residues include Lys262 and Asp267. The active site involves Lys274. 3 residues coordinate Mn(2+): Asp285, Asp344, and Glu346. Arg348 is an active-site residue.

This sequence belongs to the peptidase M17 family. Mn(2+) serves as cofactor.

It is found in the cytoplasm. It catalyses the reaction Release of an N-terminal amino acid, Xaa-|-Yaa-, in which Xaa is preferably Leu, but may be other amino acids including Pro although not Arg or Lys, and Yaa may be Pro. Amino acid amides and methyl esters are also readily hydrolyzed, but rates on arylamides are exceedingly low.. The catalysed reaction is Release of an N-terminal amino acid, preferentially leucine, but not glutamic or aspartic acids.. Its function is as follows. Presumably involved in the processing and regular turnover of intracellular proteins. Catalyzes the removal of unsubstituted N-terminal amino acids from various peptides. This is Probable cytosol aminopeptidase from Xanthomonas oryzae pv. oryzae (strain MAFF 311018).